A 56-amino-acid polypeptide reads, in one-letter code: Small ribosomal subunit protein uS14 (56 aa).

Positions 21, 24, 39, and 42 each coordinate Zn(2+).

The protein belongs to the universal ribosomal protein uS14 family. Zinc-binding uS14 subfamily. Part of the 30S ribosomal subunit. The cofactor is Zn(2+).

Its function is as follows. Binds 16S rRNA, required for the assembly of 30S particles. The chain is Small ribosomal subunit protein uS14 from Thermococcus kodakarensis (strain ATCC BAA-918 / JCM 12380 / KOD1) (Pyrococcus kodakaraensis (strain KOD1)).